Consider the following 80-residue polypeptide: Conotoxin Pu11.1 (80 aa).

A signal peptide spans 1-19 (MKLVLAIVLILMLLSLSTG). The propeptide occupies 20–42 (AEMSDNHASRSATALTDRLLGPK). 4 disulfide bridges follow: C46-C60, C53-C65, C59-C72, and C64-C79.

This sequence belongs to the conotoxin I3 superfamily. Expressed by the venom duct.

Its subcellular location is the secreted. In Conus pulicarius (Flea-bitten cone), this protein is Conotoxin Pu11.1.